Consider the following 620-residue polypeptide: Chaperone protein HscA homolog (620 aa).

The protein belongs to the heat shock protein 70 family.

Its function is as follows. Chaperone involved in the maturation of iron-sulfur cluster-containing proteins. Has a low intrinsic ATPase activity which is markedly stimulated by HscB. This is Chaperone protein HscA homolog from Shewanella sediminis (strain HAW-EB3).